Reading from the N-terminus, the 216-residue chain is Uridine kinase (216 aa).

16–23 (GASASGKS) serves as a coordination point for ATP.

Belongs to the uridine kinase family.

The protein localises to the cytoplasm. It catalyses the reaction uridine + ATP = UMP + ADP + H(+). It carries out the reaction cytidine + ATP = CMP + ADP + H(+). It functions in the pathway pyrimidine metabolism; CTP biosynthesis via salvage pathway; CTP from cytidine: step 1/3. It participates in pyrimidine metabolism; UMP biosynthesis via salvage pathway; UMP from uridine: step 1/1. The protein is Uridine kinase of Mannheimia succiniciproducens (strain KCTC 0769BP / MBEL55E).